Consider the following 547-residue polypeptide: Large cysteine-rich periplasmic protein OmcB (547 aa).

Positions 1–22 (MNKLIRRAVTIFAVTSVASLFA) are cleaved as a signal peptide. Residues 23–40 (SGVLETSMAESLSTNVIS) constitute a propeptide that is removed on maturation. A disordered region spans residues 45–84 (KAKDNTSHKSKKARKNHSKETPVDRKEVAPVHESKATGPK). The segment covering 52–61 (HKSKKARKNH) has biased composition (basic residues). Positions 62–79 (SKETPVDRKEVAPVHESK) are enriched in basic and acidic residues.

Part of a disulfide cross-linked outer membrane complex (COMC) composed of the major outer membrane porin (MOMP), the small cysteine-rich protein (OmcA) and the large cysteine-rich periplasmic protein (OmcB).

It localises to the periplasm. Its function is as follows. In elementary bodies (EBs, the infectious stage, which is able to survive outside the host cell) provides the structural integrity of the outer envelope through disulfide cross-links with the small cysteine-rich protein and the major outer membrane protein. It has been described in publications as the Sarkosyl-insoluble COMC (Chlamydia outer membrane complex), and serves as the functional equivalent of peptidoglycan. In Chlamydia trachomatis serovar D (strain ATCC VR-885 / DSM 19411 / UW-3/Cx), this protein is Large cysteine-rich periplasmic protein OmcB (omcB).